The primary structure comprises 449 residues: Tubulin alpha-B chain (449 aa).

Gln11, Glu71, Ser140, Gly144, Thr145, Thr179, Asn206, and Asn228 together coordinate GTP. Glu71 contacts Mg(2+). Glu254 is an active-site residue.

This sequence belongs to the tubulin family. Dimer of alpha and beta chains. A typical microtubule is a hollow water-filled tube with an outer diameter of 25 nm and an inner diameter of 15 nM. Alpha-beta heterodimers associate head-to-tail to form protofilaments running lengthwise along the microtubule wall with the beta-tubulin subunit facing the microtubule plus end conferring a structural polarity. Microtubules usually have 13 protofilaments but different protofilament numbers can be found in some organisms and specialized cells. The cofactor is Mg(2+).

It is found in the cytoplasm. Its subcellular location is the cytoskeleton. It catalyses the reaction GTP + H2O = GDP + phosphate + H(+). Functionally, tubulin is the major constituent of microtubules, a cylinder consisting of laterally associated linear protofilaments composed of alpha- and beta-tubulin heterodimers. Microtubules grow by the addition of GTP-tubulin dimers to the microtubule end, where a stabilizing cap forms. Below the cap, tubulin dimers are in GDP-bound state, owing to GTPase activity of alpha-tubulin. In Neurospora crassa (strain ATCC 24698 / 74-OR23-1A / CBS 708.71 / DSM 1257 / FGSC 987), this protein is Tubulin alpha-B chain (tba-2).